The chain runs to 158 residues: Small ribosomal subunit protein uS7 (158 aa).

The protein belongs to the universal ribosomal protein uS7 family. As to quaternary structure, part of the 30S ribosomal subunit. Contacts proteins S9 and S11.

Its function is as follows. One of the primary rRNA binding proteins, it binds directly to 16S rRNA where it nucleates assembly of the head domain of the 30S subunit. Is located at the subunit interface close to the decoding center, probably blocks exit of the E-site tRNA. The protein is Small ribosomal subunit protein uS7 of Wolbachia pipientis subsp. Culex pipiens (strain wPip).